A 287-amino-acid polypeptide reads, in one-letter code: MMKNILAIQSHVVYGHAGNSAAEFPMRRLGANVWPLNTVQFSNHTQYGKWTGCVMPPSHLTEIVQGIAAIDKLHTCDAVLSGYLGSAEQGEHILGIVRQVKAANPQAKYFCDPVMGHPEKGCIVAPGVAEFHVRHGLPASDIIAPNLVELEILCEHAVNNVEEAVLAARELIAQGPQIVLVKHLARAGYSRDRFEMLLVTADEAWHISRPLVDFGMRQPVGVGDVTSGLLLVKLLQGATLQEALEHVTAAVYEIMVTTKAMQEYELQVVAAQDRIAKPEHYFSATKL.

Residues Ser10 and 45–46 (TQ) contribute to the substrate site. Residues Asp112, Ala144, Glu149, Lys182, and 209–212 (RPLV) each bind ATP. A substrate-binding site is contributed by Asp224.

It belongs to the pyridoxine kinase family. PdxY subfamily. In terms of assembly, homodimer. Requires Mg(2+) as cofactor.

The catalysed reaction is pyridoxal + ATP = pyridoxal 5'-phosphate + ADP + H(+). It functions in the pathway cofactor metabolism; pyridoxal 5'-phosphate salvage; pyridoxal 5'-phosphate from pyridoxal: step 1/1. In terms of biological role, pyridoxal kinase involved in the salvage pathway of pyridoxal 5'-phosphate (PLP). Catalyzes the phosphorylation of pyridoxal to PLP. The polypeptide is Pyridoxal kinase PdxY (Shigella boydii serotype 4 (strain Sb227)).